Consider the following 66-residue polypeptide: UPF0337 protein SAG0606 (66 aa).

Basic and acidic residues predominate over residues 1–10 (MSQEKLKSKV). Residues 1–23 (MSQEKLKSKVEQASGSLKEGAGK) form a disordered region.

This sequence belongs to the UPF0337 (CsbD) family.

The protein is UPF0337 protein SAG0606 of Streptococcus agalactiae serotype V (strain ATCC BAA-611 / 2603 V/R).